The primary structure comprises 270 residues: GSGSAATDKFKAERATADTSPERLAAIAKDALGALNDVILKHGVTYPEYRVFKQWLIDVGEGGEWPLFLDVFIEHSVEEVLARSRKGTMGSIEGPYYIENSPELPSKCTLPMREEDEKITPLVFSGQVTDLDGNGLAGAKVELWHADNDGYYSQFAPHLPEWNLRGTIIADEEGRYEITTIQPAPYQIPTDGPTGQFIEAQNGHPWRPAHLHLIVSAPGKESVTTQLYFKGGEWIDSDVASATKPELILDPKTGDDGKNYVTYNFVLDPA.

Fe cation-binding residues include tyrosine 152, tyrosine 186, histidine 210, and histidine 212.

Belongs to the intradiol ring-cleavage dioxygenase family. The cofactor is Fe(3+).

It carries out the reaction catechol + O2 = cis,cis-muconate + 2 H(+). The polypeptide is Catechol 1,2-dioxygenase (catA) (Rhodococcus opacus (Nocardia opaca)).